A 308-amino-acid chain; its full sequence is Protein FdhE homolog (308 aa).

This sequence belongs to the FdhE family.

The protein resides in the cytoplasm. Its function is as follows. Necessary for formate dehydrogenase activity. The protein is Protein FdhE homolog of Edwardsiella ictaluri (strain 93-146).